The sequence spans 206 residues: Eukaryotic translation initiation factor isoform 4E-2 (206 aa).

Cys-103 and Cys-142 are disulfide-bonded.

The protein belongs to the eukaryotic initiation factor 4E family. As to quaternary structure, EIF4F is a multi-subunit complex, the composition of which varies with external and internal environmental conditions. It is composed of at least EIF4A, EIF4E and EIF4G. EIF4E is also known to interact with other partners. In higher plants two isoforms of EIF4F have been identified, named isoform EIF4F and isoform EIF(iso)4F. Isoform EIF4F has subunits p220 and p26, whereas isoform EIF(iso)4F has subunits p82 and p28. Post-translationally, according to the redox status, the Cys-103-Cys-142 disulfide bridge may have a role in regulating protein function by affecting its ability to bind capped mRNA.

In terms of biological role, recognizes and binds the 7-methylguanosine-containing mRNA cap during an early step in the initiation of protein synthesis and facilitates ribosome binding by inducing the unwinding of the mRNAs secondary structures. The sequence is that of Eukaryotic translation initiation factor isoform 4E-2 from Oryza sativa subsp. japonica (Rice).